The chain runs to 249 residues: Metallo-beta-lactamase type 2 (249 aa).

Positions 1–22 (MLKKIKISLILALGLTSLQAFG) are cleaved as a signal peptide. His98, His100, Asp102, His161, and Cys180 together coordinate Zn(2+). Lys183 lines the substrate pocket. Zn(2+) is bound at residue His222.

This sequence belongs to the metallo-beta-lactamase superfamily. Class-B beta-lactamase family. In terms of assembly, monomer. Zn(2+) is required as a cofactor.

The protein localises to the periplasm. It carries out the reaction a beta-lactam + H2O = a substituted beta-amino acid. Its activity is regulated as follows. Inhibited by chelating agents such as EDTA, 1-10 phenanthroline and pyridine-2,6-dicarboxylic acid. Its function is as follows. Confers resistance to the different beta-lactams antibiotics (penicillin, cephalosporin and carbapenem) via the hydrolysis of the beta-lactam ring. In Elizabethkingia meningoseptica (Chryseobacterium meningosepticum), this protein is Metallo-beta-lactamase type 2 (blaB1).